Reading from the N-terminus, the 153-residue chain is ORM1-like protein 1 (153 aa).

At Met-1–Tyr-26 the chain is on the cytoplasmic side. Transmembrane regions (helical) follow at residues Ala-27–Pro-46 and Val-47–Leu-64. Topologically, residues His-65–Lys-100 are cytoplasmic. A helical transmembrane segment spans residues Phe-101–Thr-121. Topologically, residues Thr-122 to His-123 are extracellular. Residues Phe-124–Pro-140 traverse the membrane as a helical segment. The Cytoplasmic portion of the chain corresponds to Gln-141–Tyr-153.

Belongs to the ORM family. As to quaternary structure, ceramide-sensitive subunit of the serine palmitoyltransferase (SPT) complex, which is also composed of SPTLC1, SPTLC2/3 and SPTSSA/B.

It is found in the endoplasmic reticulum membrane. Its function is as follows. Plays an essential role in the homeostatic regulation of sphingolipid de novo biosynthesis by modulating the activity of the serine palmitoyltransferase (SPT) in response to ceramide levels. When complexed to SPT, the binding of ceramides to its N-terminus stabilizes a conformation that block SPT substrate entry, hence preventing SPT catalytic activity. Through this mechanism, maintains ceramide levels at sufficient concentrations for the production of complex sphingolipids, but which prevents the accumulation of ceramides to levels that trigger apoptosis. This is ORM1-like protein 1 (ORMDL1) from Bos taurus (Bovine).